A 317-amino-acid chain; its full sequence is TPR repeat-containing thioredoxin TDX (317 aa).

Residues 1-48 (MATAGASSFEDEIMESDIELEGEAVEPDNDPPQKMGDPSVEVSDEKRD) form a disordered region. Residues 9 to 29 (FEDEIMESDIELEGEAVEPDN) are compositionally biased toward acidic residues. 3 TPR repeats span residues 50–83 (AQLCKNKGVDAFSEGKLDEAIEHLTEAIVLNPTS), 85–117 (IAYATRAVIFVKSKKPNAAIRDADAALKINPDS), and 119–151 (KGYKSRGMAKAMLGKWEEAAQDLRMAAKLDYDE). The Thioredoxin domain maps to 189–316 (EKQRKHAEEV…LERKVAQHGS (128 aa)). Catalysis depends on nucleophile residues C242 and C245. An intrachain disulfide couples C242 to C245.

It belongs to the thioredoxin family.

Its function is as follows. Probable thiol-disulfide oxidoreductase that may participate in various redox reactions and act as chaperone under heat shock. May interact with HSP70 proteins through the TPR repeats. In Oryza sativa subsp. japonica (Rice), this protein is TPR repeat-containing thioredoxin TDX.